Here is a 44-residue protein sequence, read N- to C-terminus: Protein PsbN (44 aa).

Residues 6–26 form a helical membrane-spanning segment; the sequence is FFYGVFLWCLLISVTGYSIYI.

This sequence belongs to the PsbN family.

Its subcellular location is the plastid. The protein localises to the chloroplast thylakoid membrane. In terms of biological role, may play a role in photosystem I and II biogenesis. The protein is Protein PsbN of Ostreococcus tauri.